The chain runs to 220 residues: UPF0319 protein Ent638_1476 (220 aa).

A signal peptide spans 1 to 20 (MKTGIVSAVLALVMPVCVYA).

It belongs to the UPF0319 family.

This chain is UPF0319 protein Ent638_1476, found in Enterobacter sp. (strain 638).